The sequence spans 234 residues: Putative N-acetylmannosamine-6-phosphate 2-epimerase (234 aa).

It belongs to the NanE family.

It catalyses the reaction an N-acyl-D-glucosamine 6-phosphate = an N-acyl-D-mannosamine 6-phosphate. It functions in the pathway amino-sugar metabolism; N-acetylneuraminate degradation; D-fructose 6-phosphate from N-acetylneuraminate: step 3/5. In terms of biological role, converts N-acetylmannosamine-6-phosphate (ManNAc-6-P) to N-acetylglucosamine-6-phosphate (GlcNAc-6-P). This is Putative N-acetylmannosamine-6-phosphate 2-epimerase from Klebsiella pneumoniae subsp. pneumoniae (strain ATCC 700721 / MGH 78578).